A 455-amino-acid chain; its full sequence is Bifunctional protein GlmU (455 aa).

Positions 1–229 (MLNSAMSVVI…ISETEGVNNR (229 aa)) are pyrophosphorylase. Residues 11–14 (LAAG), lysine 25, glutamine 76, 81–82 (GT), 103–105 (YGD), glycine 140, glutamate 154, asparagine 169, and asparagine 227 each bind UDP-N-acetyl-alpha-D-glucosamine. Aspartate 105 contacts Mg(2+). Asparagine 227 is a binding site for Mg(2+). Positions 230–250 (LQLSRLERIYQAEQAEKLLLA) are linker. Residues 251–455 (GVMLRDPARF…KQGWQRPVKK (205 aa)) form an N-acetyltransferase region. 2 residues coordinate UDP-N-acetyl-alpha-D-glucosamine: arginine 333 and lysine 351. Histidine 363 acts as the Proton acceptor in catalysis. UDP-N-acetyl-alpha-D-glucosamine-binding residues include tyrosine 366 and asparagine 377. Residues alanine 380, 386–387 (NY), serine 405, alanine 423, and arginine 440 contribute to the acetyl-CoA site.

The protein in the N-terminal section; belongs to the N-acetylglucosamine-1-phosphate uridyltransferase family. This sequence in the C-terminal section; belongs to the transferase hexapeptide repeat family. In terms of assembly, homotrimer. Mg(2+) serves as cofactor.

It localises to the cytoplasm. The enzyme catalyses alpha-D-glucosamine 1-phosphate + acetyl-CoA = N-acetyl-alpha-D-glucosamine 1-phosphate + CoA + H(+). It carries out the reaction N-acetyl-alpha-D-glucosamine 1-phosphate + UTP + H(+) = UDP-N-acetyl-alpha-D-glucosamine + diphosphate. The protein operates within nucleotide-sugar biosynthesis; UDP-N-acetyl-alpha-D-glucosamine biosynthesis; N-acetyl-alpha-D-glucosamine 1-phosphate from alpha-D-glucosamine 6-phosphate (route II): step 2/2. It functions in the pathway nucleotide-sugar biosynthesis; UDP-N-acetyl-alpha-D-glucosamine biosynthesis; UDP-N-acetyl-alpha-D-glucosamine from N-acetyl-alpha-D-glucosamine 1-phosphate: step 1/1. It participates in bacterial outer membrane biogenesis; LPS lipid A biosynthesis. Functionally, catalyzes the last two sequential reactions in the de novo biosynthetic pathway for UDP-N-acetylglucosamine (UDP-GlcNAc). The C-terminal domain catalyzes the transfer of acetyl group from acetyl coenzyme A to glucosamine-1-phosphate (GlcN-1-P) to produce N-acetylglucosamine-1-phosphate (GlcNAc-1-P), which is converted into UDP-GlcNAc by the transfer of uridine 5-monophosphate (from uridine 5-triphosphate), a reaction catalyzed by the N-terminal domain. The chain is Bifunctional protein GlmU from Salmonella arizonae (strain ATCC BAA-731 / CDC346-86 / RSK2980).